Reading from the N-terminus, the 360-residue chain is Dehydrogenase mokE (360 aa).

50-53 (SDTK) contacts NADP(+). 134–141 (AGISTAGL) is a binding site for substrate. Residues 173 to 176 (STAT), 196 to 199 (SPHN), Tyr214, 261 to 262 (LN), and Thr279 each bind NADP(+). 281 to 285 (GPTIF) provides a ligand contact to substrate. 350–351 (LS) provides a ligand contact to NADP(+).

Belongs to the zinc-containing alcohol dehydrogenase family. In terms of assembly, monomer.

Its pathway is polyketide biosynthesis; lovastatin biosynthesis. In terms of biological role, dehydrogenase; part of the gene cluster that mediates the biosynthesis of monakolin K, also known as lovastatin, and which acts as a potent competitive inhibitor of HMG-CoA reductase. Monakolin K biosynthesis is performed in two stages. The first stage is catalyzed by the nonaketide synthase mokA, which belongs to type I polyketide synthases and catalyzes the iterative nine-step formation of the polyketide. This PKS stage is completed by the action of dehydrogenase mokE, which catalyzes the NADPH-dependent reduction of the unsaturated tetra-, penta- and heptaketide intermediates that arise during the mokA-mediated biosynthesis of the nonaketide chain and leads to dihydromonacolin L. Covalently bound dihydromonacolin L is released from mokA by the mokD esterase. Conversion of dihydromonacolin L into monacolin L and then monacolin J is subsequently performed with the participation of molecular oxygen and P450 monoogygenase mokC. Finally, mokF performs the conversion of monacoline J to monacoline K through the addition of the side-chain diketide moiety (2R)-2-methylbutanoate produced by the diketide synthase mokB. The sequence is that of Dehydrogenase mokE from Monascus pilosus (Red mold).